The following is a 449-amino-acid chain: UDP-N-acetylmuramoylalanine--D-glutamate ligase (449 aa).

118–124 (GTNGKTT) is a binding site for ATP.

Belongs to the MurCDEF family.

It is found in the cytoplasm. The catalysed reaction is UDP-N-acetyl-alpha-D-muramoyl-L-alanine + D-glutamate + ATP = UDP-N-acetyl-alpha-D-muramoyl-L-alanyl-D-glutamate + ADP + phosphate + H(+). It participates in cell wall biogenesis; peptidoglycan biosynthesis. Its function is as follows. Cell wall formation. Catalyzes the addition of glutamate to the nucleotide precursor UDP-N-acetylmuramoyl-L-alanine (UMA). The sequence is that of UDP-N-acetylmuramoylalanine--D-glutamate ligase from Staphylococcus aureus (strain Mu3 / ATCC 700698).